Consider the following 453-residue polypeptide: Plasmepsin II (453 aa).

Topologically, residues 1 to 37 (MDITVREHDFKHGFIKSNSTFDGLNIDNSKNKKKIQK) are cytoplasmic. Positions 1-124 (MDITVREHDF…SGLTKTNYLG (124 aa)) are excised as a propeptide. The chain crosses the membrane as a helical; Signal-anchor for type II membrane protein span at residues 38 to 58 (GFQILYVLLFCSVMCGLFYYV). Residues 59–453 (YENVWLQRDN…VGIALAKKNL (395 aa)) are Lumenal-facing. The Peptidase A1 domain occupies 140–447 (FYGDAEVGDN…DYDNQSVGIA (308 aa)). Asp-158 is a catalytic residue. Cys-171 and Cys-176 form a disulfide bridge. Asp-338 is a catalytic residue. The cysteines at positions 373 and 409 are disulfide-linked.

It belongs to the peptidase A1 family. In terms of assembly, component of the hemozoin formation complex (HFC) composed of falcipains FP2A and/or FP2B, plasmepsins PMII, PMIII/HAP and PMIV, heme detoxifying protein HDP and falcilysin FLN. The HFC complex is involved in hemoglobin degradation and detoxification of heme in the food vacuole during the asexual blood stage. Not N-glycosylated. In terms of processing, proteolytically cleaved into the soluble active mature form in the digestive vacuole by cysteine protease falcipains; the process begins at the early ring stage. Proteolysis requires an acidic environment. In absence of falcipains, autoprocessing may serve as an alternate activation system.

It is found in the membrane. The protein resides in the vacuole lumen. It localises to the vacuole membrane. The catalysed reaction is Hydrolysis of the bonds linking certain hydrophobic residues in hemoglobin or globin. Also cleaves small molecules substrates such as Ala-Leu-Glu-Arg-Thr-Phe-|-Phe(NO2)-Ser-Phe-Pro-Thr.. Its activity is regulated as follows. Inhibited by pepstatin A. Inhibited by KNI derived compounds (KNI-10742, 10743, 10395, 10333, and 10343). During the asexual blood stage, participates in initial cleavage of native host hemoglobin (Hb) resulting in Hb denaturation. May cleave preferentially denatured hemoglobin that has been cleaved by PMI. Digestion of host Hb is an essential step which provides the parasite with amino acids for protein synthesis, and regulates osmolarity. This is Plasmepsin II from Plasmodium falciparum (isolate 3D7).